Reading from the N-terminus, the 540-residue chain is Aquaporin-5 (540 aa).

Positions 1-224 are disordered; the sequence is MSGEGTDLPT…ESIDGYNYES (224 aa). Residues 1–263 are Cytoplasmic-facing; sequence MSGEGTDLPT…QWMNSNFKNH (263 aa). Polar residues predominate over residues 25–44; the sequence is PGSSQQQLVPIAHTISSPSK. 4 stretches are compositionally biased toward basic and acidic residues: residues 119-133, 140-155, 174-194, and 204-214; these read RARE…EREN, RARD…ERSR, YFDD…KGMR, and SGEKVRRKSTD. The helical transmembrane segment at 264–284 threads the bilayer; sequence FVATIGEFVGTTMFLFFAFAG. The Extracellular segment spans residues 285 to 308; sequence TQVANIDSNTVNTTTGAATGFNIA. Residue Asn296 is glycosylated (N-linked (GlcNAc...) asparagine). The helical transmembrane segment at 309 to 329 threads the bilayer; sequence VQLYIAVIFGFSLMVNVWIFF. Residues 330 to 332 are Cytoplasmic-facing; it reads RIS. The helical transmembrane segment at 333–353 threads the bilayer; it reads GGLFNPAVTLGMVLVGAIPIP. The Extracellular segment spans residues 354 to 356; sequence RAA. A helical membrane pass occupies residues 357–377; it reads CLFFAQILGGIAASGMVLGLF. Topologically, residues 378–393 are cytoplasmic; that stretch reads PTTFNVRTTLGASTST. A helical membrane pass occupies residues 394 to 414; the sequence is VQGVFIEAILTAELVFTIFML. Residues 415-420 lie on the Extracellular side of the membrane; the sequence is AKEKHK. The chain crosses the membrane as a helical span at residues 421 to 441; sequence ATFIAPVGIGLALFIAEMVGV. The Cytoplasmic portion of the chain corresponds to 442-467; the sequence is YYTGGSLNPARSFGPCVVSGSFDKEH. The chain crosses the membrane as a helical span at residues 468-488; the sequence is WIYWIGPITGTFIAVFFYKFI. Topologically, residues 489 to 540 are extracellular; that stretch reads KMLEYEMANPGQDGDAKNDPTQNEKKREQILEERNRRYEKRNGSLRPGSRLS. The disordered stretch occupies residues 499–540; it reads GQDGDAKNDPTQNEKKREQILEERNRRYEKRNGSLRPGSRLS. Positions 502-530 are enriched in basic and acidic residues; it reads GDAKNDPTQNEKKREQILEERNRRYEKRN. N-linked (GlcNAc...) asparagine glycosylation occurs at Asn530.

This sequence belongs to the MIP/aquaporin (TC 1.A.8) family.

The protein localises to the membrane. It carries out the reaction H2O(in) = H2O(out). In terms of biological role, water channel required to facilitate the transport of water across membranes. May play a role in the vegetative growth. The protein is Aquaporin-5 of Botryotinia fuckeliana (strain B05.10) (Noble rot fungus).